Consider the following 139-residue polypeptide: Inactive palmitoleoyl-protein carboxylesterase notum1b (139 aa).

Belongs to the pectinacetylesterase family. Notum subfamily.

In terms of biological role, probable inactive palmitoleoyl-protein carboxylesterase. This is Inactive palmitoleoyl-protein carboxylesterase notum1b from Danio rerio (Zebrafish).